Consider the following 453-residue polypeptide: Tryptophan dimethylallyltransferase cnsF (453 aa).

Residues 84–85 and Glu93 each bind L-tryptophan; that span reads IL. Arg104, Lys190, and Tyr192 together coordinate substrate. L-tryptophan contacts are provided by Tyr194 and Arg248. Substrate contacts are provided by Arg261, Lys263, Tyr265, Gln347, and Tyr349.

Belongs to the tryptophan dimethylallyltransferase family. In terms of assembly, homodimer.

The enzyme catalyses L-tryptophan + dimethylallyl diphosphate = 4-(3-methylbut-2-enyl)-L-tryptophan + diphosphate. The protein operates within alkaloid biosynthesis. Its function is as follows. Tryptophan dimethylallyltransferase; part of the gene cluster that mediates the biosynthesis of communesins, a prominent class of indole alkaloids with great potential as pharmaceuticals. Communesins are biosynthesized by the coupling of tryptamine and aurantioclavine, two building blocks derived from L-tryptophan. The L-tryptophan decarboxylase cnsB converts L-tryptophan to tryptamine, whereas the tryptophan dimethylallyltransferase cnsF converts L-tryptophan to 4-dimethylallyl tryptophan which is further transformed to aurantioclavine by the aurantioclavine synthase cnsA, probably aided by the catalase cnsD. The cytochrome P450 monooxygenase cnsC catalyzes the heterodimeric coupling between the two different indole moieties, tryptamine and aurantioclavine, to construct vicinal quaternary stereocenters and yield the heptacyclic communesin scaffold. The O-methyltransferase cnsE then methylates the communesin scaffold to produce communesin K, the simplest characterized communesin that contains the heptacyclic core. The dioxygenase cnsJ converts communesin K into communesin I. Acylation to introduce the hexadienyl group at position N16 of communesin I by the acyltransferase cnsK leads to the production of communesin B. The hexadienyl group is produced by the highly reducing polyketide synthase cnsI, before being hydrolytically removed from cnsI by the serine hydrolase cnsH, converted into hexadienyl-CoA by the CoA ligase cnsG, and then transferred to communesin I by cnsK. Surprisingly, cnsK may also be a promiscuous acyltransferase that can tolerate a range of acyl groups, including acetyl-, propionyl-, and butyryl-CoA, which lead to communesins A, G and H respectively. The roles of the alpha-ketoglutarate-dependent dioxygenases cnsM and cnsP have still to be determined. This Penicillium expansum (Blue mold rot fungus) protein is Tryptophan dimethylallyltransferase cnsF.